Consider the following 205-residue polypeptide: Latherin (205 aa).

The cysteines at positions 133 and 176 are disulfide-linked.

Belongs to the BPI/LBP/Plunc superfamily. Plunc family. As to quaternary structure, monomer.

It is found in the secreted. Major protein in sweat, has surfactant properties. This is Latherin (LATH) from Equus quagga burchellii (Burchell's zebra).